Reading from the N-terminus, the 239-residue chain is Ribosomal RNA small subunit methyltransferase G (239 aa).

S-adenosyl-L-methionine is bound by residues G77, F82, 128-129 (AE), and R147.

It belongs to the methyltransferase superfamily. RNA methyltransferase RsmG family.

It localises to the cytoplasm. Its function is as follows. Specifically methylates the N7 position of guanine in position 535 of 16S rRNA. The protein is Ribosomal RNA small subunit methyltransferase G of Bacillus cereus (strain G9842).